Here is a 294-residue protein sequence, read N- to C-terminus: Complement C1q tumor necrosis factor-related protein 2 (294 aa).

The signal sequence occupies residues M1–A24. A disordered region spans residues Q42 to R156. Residues P48 to C150 enclose the Collagen-like domain. Positions P50–A59 are enriched in pro residues. Over residues D75 to S87 the composition is skewed to basic and acidic residues. The segment covering K105 to H129 has biased composition (low complexity). The 137-residue stretch at S154–D290 folds into the C1q domain.

In terms of assembly, may interact with ERFE.

The protein resides in the secreted. Functionally, involved in the regulation of lipid metabolism in adipose tissue and liver. This is Complement C1q tumor necrosis factor-related protein 2 (C1qtnf2) from Mus musculus (Mouse).